We begin with the raw amino-acid sequence, 380 residues long: Maintenance of mitochondrial morphology protein 1 (380 aa).

Residues 1–64 (MQGRAIWAEG…IVPSLSFIQG (64 aa)) lie on the Lumenal side of the membrane. A helical membrane pass occupies residues 65–85 (FMAGQAVLLMLFLGLFRYFFM). Topologically, residues 86–380 (TSSPGTRAQQ…IGTSPADPLA (295 aa)) are cytoplasmic. Positions 147-369 (APESLDWLNV…WPHFWHIPLP (223 aa)) constitute an SMP-LTD domain.

Belongs to the MMM1 family. As to quaternary structure, homodimer. Component of the ER-mitochondria encounter structure (ERMES) or MDM complex, composed of MMM1, MDM10, MDM12 and MDM34. An MMM1 homodimer associates with one molecule of MDM12 on each side in a pairwise head-to-tail manner, and the SMP-LTD domains of MMM1 and MDM12 generate a continuous hydrophobic tunnel for phospholipid trafficking.

The protein resides in the endoplasmic reticulum membrane. In terms of biological role, component of the ERMES/MDM complex, which serves as a molecular tether to connect the endoplasmic reticulum (ER) and mitochondria. Components of this complex are involved in the control of mitochondrial shape and protein biogenesis, and function in nonvesicular lipid trafficking between the ER and mitochondria. The MDM12-MMM1 subcomplex functions in the major beta-barrel assembly pathway that is responsible for biogenesis of all outer membrane beta-barrel proteins, and acts in a late step after the SAM complex. The MDM10-MDM12-MMM1 subcomplex further acts in the TOM40-specific pathway after the action of the MDM12-MMM1 complex. Essential for establishing and maintaining the structure of mitochondria and maintenance of mtDNA nucleoids. This Malassezia globosa (strain ATCC MYA-4612 / CBS 7966) (Dandruff-associated fungus) protein is Maintenance of mitochondrial morphology protein 1.